A 462-amino-acid polypeptide reads, in one-letter code: ATP synthase subunit beta (462 aa).

151 to 158 (GGAGVGKT) is a binding site for ATP.

Belongs to the ATPase alpha/beta chains family. F-type ATPases have 2 components, CF(1) - the catalytic core - and CF(0) - the membrane proton channel. CF(1) has five subunits: alpha(3), beta(3), gamma(1), delta(1), epsilon(1). CF(0) has three main subunits: a(1), b(2) and c(9-12). The alpha and beta chains form an alternating ring which encloses part of the gamma chain. CF(1) is attached to CF(0) by a central stalk formed by the gamma and epsilon chains, while a peripheral stalk is formed by the delta and b chains.

It localises to the cell inner membrane. The catalysed reaction is ATP + H2O + 4 H(+)(in) = ADP + phosphate + 5 H(+)(out). In terms of biological role, produces ATP from ADP in the presence of a proton gradient across the membrane. The catalytic sites are hosted primarily by the beta subunits. This chain is ATP synthase subunit beta, found in Chlorobium limicola.